We begin with the raw amino-acid sequence, 158 residues long: Male-specific protein scotti (158 aa).

Residues 24–43 (NVPDGNGDGDGDGDGDGNDA) are disordered. Residues 30–42 (GDGDGDGDGDGND) are compositionally biased toward acidic residues.

It belongs to the male-specific scotti family.

Post-meiotically transcribed gene that has a role in late spermiogenesis; required for actin cone progression during spermatid individualization. This is Male-specific protein scotti from Drosophila virilis (Fruit fly).